The sequence spans 291 residues: MAVRMMQGVQAVYLESDAFLVCLNHALSTEKEEVMGLCIGQLNDHGRSDSRLAYAGAEMCTVAKKMEATRIVHIHSVIILRRSDKTKDRVEISPEQLSAASIEAERLAEQTGRPMRVVGWYHSHPHITVWPSHVDVRTQAMYQMMDQSFVGLIFACFIEDKPTKIGRVLYTCFQSVQASKSSEYERLEIPIHIVPRTTIGTVCLRSAIELPGILCQEEQEAYRRIHGLTHLDSVTKIHNGSVFTKHLCSQMSAVCGPLLQWLEDRLEQNQQRLQELEQEKEDLMEELSSLE.

The MPN domain maps to 12–179 (VYLESDAFLV…YTCFQSVQAS (168 aa)). Zn(2+) contacts are provided by H122, H124, and D135. The short motif at 122–135 (HSHPHITVWPSHVD) is the JAMM motif element. The stretch at 259–286 (LQWLEDRLEQNQQRLQELEQEKEDLMEE) forms a coiled coil.

The protein belongs to the peptidase M67A family. BRCC36 subfamily.

In terms of biological role, metalloprotease that specifically cleaves 'Lys-63'-linked polyubiquitin chains. The sequence is that of Lys-63-specific deubiquitinase BRCC36-like from Mus musculus (Mouse).